A 232-amino-acid polypeptide reads, in one-letter code: Heptaprenylglyceryl phosphate synthase (232 aa).

Lys12 lines the sn-glycerol 1-phosphate pocket. Asp14 and Thr40 together coordinate Mg(2+). Sn-glycerol 1-phosphate-binding positions include 159-164 (YLEYSG), Gly189, and 209-210 (GN).

Belongs to the GGGP/HepGP synthase family. Group I subfamily. In terms of assembly, homodimer. Mg(2+) serves as cofactor.

It carries out the reaction sn-glycerol 1-phosphate + all-trans-heptaprenyl diphosphate = 3-heptaprenyl-sn-glycero-1-phosphate + diphosphate. It functions in the pathway membrane lipid metabolism; glycerophospholipid metabolism. Functionally, prenyltransferase that catalyzes in vivo the transfer of the heptaprenyl moiety of heptaprenyl pyrophosphate (HepPP; 35 carbon atoms) to the C3 hydroxyl of sn-glycerol-1-phosphate (G1P), producing heptaprenylglyceryl phosphate (HepGP). This reaction is an ether-bond-formation step in the biosynthesis of archaea-type G1P-based membrane lipids found in Bacillales. This is Heptaprenylglyceryl phosphate synthase from Shouchella clausii (strain KSM-K16) (Alkalihalobacillus clausii).